We begin with the raw amino-acid sequence, 387 residues long: MTVLKMTDLDLQGKRVLIREDLNVPVKDGVVTSDARILAALPTIKLALEKGAAVMVCSHLGRPTEGEFSEENSLKPVAAYLSKALGREVPLVADYLDGVEVKAGDLVLFENVRFNKGEKKNADELAQKYAALCDVFVMDAFGTAHRAEGSTHGVAKFAKVATAGPLLAAELDALGKALKAPAKPMAAIVAGSKVSTKLDVLNSLSTVCDQLIVGGGIANTFLAAAGHPVGKSLYEPDLVETAKAIAAKVSVPLPVDVVVAKAFAEDAEATVKAIADVAADDMILDIGPKTAEQFAELLKTSKTILWNGPVGVFEFDQFGNGTKVLAKAIADSAAFSIAGGGDTLAAIDKYGVGADISYISTGGGAFLEFVEGKVLPAVAILEERAKA.

Substrate-binding positions include 21–23 (DLN), Arg36, 59–62 (HLGR), Arg113, and Arg146. ATP-binding positions include Lys197, Glu314, and 340 to 343 (GGDT).

Belongs to the phosphoglycerate kinase family. In terms of assembly, monomer.

It is found in the cytoplasm. The enzyme catalyses (2R)-3-phosphoglycerate + ATP = (2R)-3-phospho-glyceroyl phosphate + ADP. Its pathway is carbohydrate degradation; glycolysis; pyruvate from D-glyceraldehyde 3-phosphate: step 2/5. The polypeptide is Phosphoglycerate kinase (Pseudomonas entomophila (strain L48)).